Here is a 317-residue protein sequence, read N- to C-terminus: tRNA uridine(34) hydroxylase (317 aa).

The Rhodanese domain occupies 123 to 217; the sequence is EDDDTIVIDA…YGKDPETKGE (95 aa). Cysteine 177 serves as the catalytic Cysteine persulfide intermediate.

It belongs to the TrhO family.

The catalysed reaction is uridine(34) in tRNA + AH2 + O2 = 5-hydroxyuridine(34) in tRNA + A + H2O. Catalyzes oxygen-dependent 5-hydroxyuridine (ho5U) modification at position 34 in tRNAs. This Staphylococcus carnosus (strain TM300) protein is tRNA uridine(34) hydroxylase.